A 614-amino-acid polypeptide reads, in one-letter code: Putative N(6)-adenosine-methyltransferase MT-A70-like (614 aa).

The segment at T59 to Q78 is disordered. The segment covering P67–Q78 has biased composition (low complexity). S-adenosyl-L-methionine is bound by residues D391–I392 and D409. Positions R479–H492 are positively charged region required for RNA-binding. S-adenosyl-L-methionine contacts are provided by residues K526, R549 to N552, and N562 to Q563. The segment at P589–M614 is disordered. The segment covering V604–M614 has biased composition (polar residues).

It belongs to the MT-A70-like family.

Its subcellular location is the nucleus. It catalyses the reaction an adenosine in mRNA + S-adenosyl-L-methionine = an N(6)-methyladenosine in mRNA + S-adenosyl-L-homocysteine + H(+). In terms of biological role, putative N6-methyltransferase that methylates adenosine residues of some mRNAs. N6-methyladenosine (m6A), which is present at internal sites of some mRNAs, may play a role in the efficiency of mRNA splicing, transport or translation. The polypeptide is Putative N(6)-adenosine-methyltransferase MT-A70-like (Medicago truncatula (Barrel medic)).